Consider the following 430-residue polypeptide: Serine hydroxymethyltransferase 2 (430 aa).

(6S)-5,6,7,8-tetrahydrofolate contacts are provided by residues L128 and 132–134; that span reads GHL. K237 is subject to N6-(pyridoxal phosphate)lysine.

Belongs to the SHMT family. As to quaternary structure, homodimer. It depends on pyridoxal 5'-phosphate as a cofactor.

The protein resides in the cytoplasm. It carries out the reaction (6R)-5,10-methylene-5,6,7,8-tetrahydrofolate + glycine + H2O = (6S)-5,6,7,8-tetrahydrofolate + L-serine. It participates in one-carbon metabolism; tetrahydrofolate interconversion. It functions in the pathway amino-acid biosynthesis; glycine biosynthesis; glycine from L-serine: step 1/1. In terms of biological role, catalyzes the reversible interconversion of serine and glycine with tetrahydrofolate (THF) serving as the one-carbon carrier. This reaction serves as the major source of one-carbon groups required for the biosynthesis of purines, thymidylate, methionine, and other important biomolecules. Also exhibits THF-independent aldolase activity toward beta-hydroxyamino acids, producing glycine and aldehydes, via a retro-aldol mechanism. The polypeptide is Serine hydroxymethyltransferase 2 (Rhodospirillum rubrum (strain ATCC 11170 / ATH 1.1.1 / DSM 467 / LMG 4362 / NCIMB 8255 / S1)).